The primary structure comprises 171 residues: UPF0398 protein MGAS10270_Spy1470 (171 aa).

It belongs to the UPF0398 family.

This chain is UPF0398 protein MGAS10270_Spy1470, found in Streptococcus pyogenes serotype M2 (strain MGAS10270).